The sequence spans 231 residues: Urease accessory protein UreF (231 aa).

This sequence belongs to the UreF family. As to quaternary structure, ureD, UreF and UreG form a complex that acts as a GTP-hydrolysis-dependent molecular chaperone, activating the urease apoprotein by helping to assemble the nickel containing metallocenter of UreC. The UreE protein probably delivers the nickel.

It is found in the cytoplasm. In terms of biological role, required for maturation of urease via the functional incorporation of the urease nickel metallocenter. The polypeptide is Urease accessory protein UreF (Magnetococcus marinus (strain ATCC BAA-1437 / JCM 17883 / MC-1)).